Here is a 205-residue protein sequence, read N- to C-terminus: LexA repressor (205 aa).

Residues 28 to 48 (RAEIATRLGFKSANAAEEHLK) constitute a DNA-binding region (H-T-H motif). Active-site for autocatalytic cleavage activity residues include S122 and K159.

This sequence belongs to the peptidase S24 family. Homodimer.

It carries out the reaction Hydrolysis of Ala-|-Gly bond in repressor LexA.. Represses a number of genes involved in the response to DNA damage (SOS response), including recA and lexA. In the presence of single-stranded DNA, RecA interacts with LexA causing an autocatalytic cleavage which disrupts the DNA-binding part of LexA, leading to derepression of the SOS regulon and eventually DNA repair. This Shewanella denitrificans (strain OS217 / ATCC BAA-1090 / DSM 15013) protein is LexA repressor.